The sequence spans 79 residues: Cell division protein ZapB (79 aa).

Positions 4 to 78 (EVFEKLESKV…LRALLGKMEE (75 aa)) form a coiled coil.

This sequence belongs to the ZapB family. As to quaternary structure, homodimer. The ends of the coiled-coil dimer bind to each other, forming polymers. Interacts with FtsZ.

The protein localises to the cytoplasm. Functionally, non-essential, abundant cell division factor that is required for proper Z-ring formation. It is recruited early to the divisome by direct interaction with FtsZ, stimulating Z-ring assembly and thereby promoting cell division earlier in the cell cycle. Its recruitment to the Z-ring requires functional FtsA or ZipA. The polypeptide is Cell division protein ZapB (Serratia proteamaculans (strain 568)).